Reading from the N-terminus, the 213-residue chain is uncharacterized protein (213 aa).

Polar residues predominate over residues 1-14 (MSSDVLVTTPAQRQ). A disordered region spans residues 1-26 (MSSDVLVTTPAQRQTEPHAEAVSRNR). In terms of domain architecture, HTH tetR-type spans 29-89 (QATFRKVLAA…EVYLDLVRQV (61 aa)).

This is an uncharacterized protein from Mycobacterium tuberculosis (strain CDC 1551 / Oshkosh).